The following is a 107-amino-acid chain: U1-lycotoxin-Ls1b (107 aa).

The N-terminal stretch at 1-20 (MMKVLVVIALLVTLISYSSS) is a signal peptide. Positions 21 to 41 (EGIDDLEADELLSLMANEQTR) are excised as a propeptide. Disulfide bonds link C44–C59, C51–C68, C58–C86, and C70–C84.

The protein belongs to the neurotoxin 19 (CSTX) family. 04 (U1-Lctx) subfamily. Expressed by the venom gland.

It localises to the secreted. This is U1-lycotoxin-Ls1b from Lycosa singoriensis (Wolf spider).